Reading from the N-terminus, the 379-residue chain is 1-deoxy-D-xylulose 5-phosphate reductoisomerase (379 aa).

Thr10, Gly11, Ser12, Ile13, Arg38, Asn39, and Asn121 together coordinate NADPH. Lys122 is a binding site for 1-deoxy-D-xylulose 5-phosphate. Residue Glu123 coordinates NADPH. Asp147 is a binding site for Mn(2+). The 1-deoxy-D-xylulose 5-phosphate site is built by Ser148, Glu149, Ser173, and His196. Glu149 is a Mn(2+) binding site. Gly202 lines the NADPH pocket. Residues Ser209, Asn214, Lys215, and Glu218 each contribute to the 1-deoxy-D-xylulose 5-phosphate site. Residue Glu218 coordinates Mn(2+).

It belongs to the DXR family. Mg(2+) is required as a cofactor. The cofactor is Mn(2+).

The catalysed reaction is 2-C-methyl-D-erythritol 4-phosphate + NADP(+) = 1-deoxy-D-xylulose 5-phosphate + NADPH + H(+). It participates in isoprenoid biosynthesis; isopentenyl diphosphate biosynthesis via DXP pathway; isopentenyl diphosphate from 1-deoxy-D-xylulose 5-phosphate: step 1/6. Catalyzes the NADPH-dependent rearrangement and reduction of 1-deoxy-D-xylulose-5-phosphate (DXP) to 2-C-methyl-D-erythritol 4-phosphate (MEP). This is 1-deoxy-D-xylulose 5-phosphate reductoisomerase from Chlamydia trachomatis serovar L2 (strain ATCC VR-902B / DSM 19102 / 434/Bu).